Reading from the N-terminus, the 192-residue chain is Probable nicotinate-nucleotide adenylyltransferase (192 aa).

Belongs to the NadD family.

It carries out the reaction nicotinate beta-D-ribonucleotide + ATP + H(+) = deamido-NAD(+) + diphosphate. It functions in the pathway cofactor biosynthesis; NAD(+) biosynthesis; deamido-NAD(+) from nicotinate D-ribonucleotide: step 1/1. In terms of biological role, catalyzes the reversible adenylation of nicotinate mononucleotide (NaMN) to nicotinic acid adenine dinucleotide (NaAD). In Cytophaga hutchinsonii (strain ATCC 33406 / DSM 1761 / CIP 103989 / NBRC 15051 / NCIMB 9469 / D465), this protein is Probable nicotinate-nucleotide adenylyltransferase.